The primary structure comprises 240 residues: UDP-2,3-diacylglucosamine hydrolase (240 aa).

Mn(2+) is bound by residues D7, H9, D40, N78, and H113. A substrate-binding site is contributed by 78–79 (NR). Substrate is bound by residues D121, S159, T163, K166, and H194. 2 residues coordinate Mn(2+): H194 and H196.

The protein belongs to the LpxH family. The cofactor is Mn(2+).

Its subcellular location is the cell inner membrane. The enzyme catalyses UDP-2-N,3-O-bis[(3R)-3-hydroxytetradecanoyl]-alpha-D-glucosamine + H2O = 2-N,3-O-bis[(3R)-3-hydroxytetradecanoyl]-alpha-D-glucosaminyl 1-phosphate + UMP + 2 H(+). The protein operates within glycolipid biosynthesis; lipid IV(A) biosynthesis; lipid IV(A) from (3R)-3-hydroxytetradecanoyl-[acyl-carrier-protein] and UDP-N-acetyl-alpha-D-glucosamine: step 4/6. In terms of biological role, hydrolyzes the pyrophosphate bond of UDP-2,3-diacylglucosamine to yield 2,3-diacylglucosamine 1-phosphate (lipid X) and UMP by catalyzing the attack of water at the alpha-P atom. Involved in the biosynthesis of lipid A, a phosphorylated glycolipid that anchors the lipopolysaccharide to the outer membrane of the cell. This chain is UDP-2,3-diacylglucosamine hydrolase, found in Pseudomonas entomophila (strain L48).